The sequence spans 350 residues: tRNA uridine(34) hydroxylase (350 aa).

Positions 146–240 (DDPDALFIDM…YARKAREQGL (95 aa)) constitute a Rhodanese domain. Cysteine 200 functions as the Cysteine persulfide intermediate in the catalytic mechanism.

The protein belongs to the TrhO family.

It catalyses the reaction uridine(34) in tRNA + AH2 + O2 = 5-hydroxyuridine(34) in tRNA + A + H2O. Catalyzes oxygen-dependent 5-hydroxyuridine (ho5U) modification at position 34 in tRNAs, the first step in 5-carboxymethoxyuridine (cmo5U) biosynthesis. May be part of an alternate pathway, which is able to bypass cmo5U biogenesis in a subset of tRNAs under aerobic conditions. This Escherichia coli O157:H7 protein is tRNA uridine(34) hydroxylase.